A 160-amino-acid polypeptide reads, in one-letter code: SsrA-binding protein (160 aa).

This sequence belongs to the SmpB family.

The protein localises to the cytoplasm. Required for rescue of stalled ribosomes mediated by trans-translation. Binds to transfer-messenger RNA (tmRNA), required for stable association of tmRNA with ribosomes. tmRNA and SmpB together mimic tRNA shape, replacing the anticodon stem-loop with SmpB. tmRNA is encoded by the ssrA gene; the 2 termini fold to resemble tRNA(Ala) and it encodes a 'tag peptide', a short internal open reading frame. During trans-translation Ala-aminoacylated tmRNA acts like a tRNA, entering the A-site of stalled ribosomes, displacing the stalled mRNA. The ribosome then switches to translate the ORF on the tmRNA; the nascent peptide is terminated with the 'tag peptide' encoded by the tmRNA and targeted for degradation. The ribosome is freed to recommence translation, which seems to be the essential function of trans-translation. This chain is SsrA-binding protein, found in Pasteurella multocida (strain Pm70).